The following is a 384-amino-acid chain: Succinyl-diaminopimelate desuccinylase (384 aa).

Histidine 71 is a binding site for Zn(2+). Residue aspartate 73 is part of the active site. Aspartate 104 lines the Zn(2+) pocket. The active-site Proton acceptor is the glutamate 139. Positions 140, 168, and 357 each coordinate Zn(2+).

This sequence belongs to the peptidase M20A family. DapE subfamily. As to quaternary structure, homodimer. The cofactor is Zn(2+). Co(2+) is required as a cofactor.

It carries out the reaction N-succinyl-(2S,6S)-2,6-diaminopimelate + H2O = (2S,6S)-2,6-diaminopimelate + succinate. It participates in amino-acid biosynthesis; L-lysine biosynthesis via DAP pathway; LL-2,6-diaminopimelate from (S)-tetrahydrodipicolinate (succinylase route): step 3/3. Functionally, catalyzes the hydrolysis of N-succinyl-L,L-diaminopimelic acid (SDAP), forming succinate and LL-2,6-diaminopimelate (DAP), an intermediate involved in the bacterial biosynthesis of lysine and meso-diaminopimelic acid, an essential component of bacterial cell walls. In Afipia carboxidovorans (strain ATCC 49405 / DSM 1227 / KCTC 32145 / OM5) (Oligotropha carboxidovorans), this protein is Succinyl-diaminopimelate desuccinylase.